A 319-amino-acid chain; its full sequence is ATP-dependent 6-phosphofructokinase (319 aa).

Glycine 11 contributes to the ATP binding site. An ADP-binding site is contributed by 21–25; it reads RAVVR. Residues 72–73 and 102–105 each bind ATP; these read RC and GDGS. Aspartate 103 lines the Mg(2+) pocket. 125 to 127 provides a ligand contact to substrate; sequence TID. Residue aspartate 127 is the Proton acceptor of the active site. Residue arginine 154 coordinates ADP. Residues arginine 162 and 169–171 each bind substrate; that span reads MGR. ADP is bound by residues 185–187, arginine 211, and 213–215; these read GAE and KKH. Substrate is bound by residues glutamate 222, arginine 243, and 249–252; that span reads HIQR.

It belongs to the phosphofructokinase type A (PFKA) family. ATP-dependent PFK group I subfamily. Prokaryotic clade 'B1' sub-subfamily. Homotetramer. Mg(2+) serves as cofactor.

It is found in the cytoplasm. The enzyme catalyses beta-D-fructose 6-phosphate + ATP = beta-D-fructose 1,6-bisphosphate + ADP + H(+). It functions in the pathway carbohydrate degradation; glycolysis; D-glyceraldehyde 3-phosphate and glycerone phosphate from D-glucose: step 3/4. Its activity is regulated as follows. Allosterically activated by ADP and other diphosphonucleosides, and allosterically inhibited by phosphoenolpyruvate. Its function is as follows. Catalyzes the phosphorylation of D-fructose 6-phosphate to fructose 1,6-bisphosphate by ATP, the first committing step of glycolysis. This Bacillus pumilus (strain SAFR-032) protein is ATP-dependent 6-phosphofructokinase.